A 151-amino-acid polypeptide reads, in one-letter code: Cathelicidin-3 (151 aa).

An N-terminal signal peptide occupies residues 1 to 17; it reads MLSCWVLLLALLGGACA. A propeptide spanning residues 18-122 is cleaved from the precursor; the sequence is LPAPLGYSQA…TCVDSMADPV (105 aa). 2 cysteine pairs are disulfide-bonded: C75-C86 and C97-C114. The helical transmembrane segment at 128–148 threads the bilayer; it reads WPLVPVAINTVAAGINLYKAI.

Belongs to the cathelicidin family. In terms of tissue distribution, detected in bone marrow, liver and lung.

Its subcellular location is the secreted. The protein localises to the membrane. Its function is as follows. May bind bacterial lipopolysaccharide (LPS). May have antimicrobial activity and play a role in the innate immune response. The chain is Cathelicidin-3 (CATHL3) from Gallus gallus (Chicken).